The chain runs to 281 residues: Small ribosomal subunit protein uS2 (281 aa).

Belongs to the universal ribosomal protein uS2 family.

This chain is Small ribosomal subunit protein uS2 (rpsB), found in Chlamydia muridarum (strain MoPn / Nigg).